Reading from the N-terminus, the 288-residue chain is uncharacterized protein (288 aa).

Residues 126-136 (VAAPASTPVAP) are compositionally biased toward low complexity. Disordered regions lie at residues 126–227 (VAAP…VTSV) and 258–288 (KEKD…SSEE). The segment covering 143-152 (RKEFKNEKWK) has biased composition (basic and acidic residues). The segment covering 153-162 (DKKKQGRRRN) has biased composition (basic residues). Positions 180-194 (VAEECLQESSSEEGD) are enriched in acidic residues. The span at 278-288 (TLVHDRISSEE) shows a compositional bias: basic and acidic residues.

The protein belongs to the chlamydial CPn_0623/CT_504/TC_0791 family.

This is an uncharacterized protein from Chlamydia trachomatis serovar D (strain ATCC VR-885 / DSM 19411 / UW-3/Cx).